Consider the following 489-residue polypeptide: Blue-light-activated histidine kinase (489 aa).

Residues Ala-19–Lys-93 form the PAS domain. Cys-69 is modified (S-4a-FMN cysteine). 2 PAC domains span residues Lys-93–Lys-147 and Tyr-232–Leu-281. Residues Asn-259–Thr-341 form an HWE histidine kinase domain region. His-288 bears the Phosphohistidine; by autocatalysis mark.

In terms of processing, FMN binds covalently to cysteine after exposure to blue light and this bond is spontaneously broken in the dark.

It carries out the reaction ATP + protein L-histidine = ADP + protein N-phospho-L-histidine.. Its function is as follows. Photosensitive kinase that is involved in increased bacterial virulence upon exposure to light. Once ejected from an infected animal host, sunlight acts as an environmental signal that increases the virulence of the bacterium, preparing it for infection of the next host. This photoreceptor protein is directly related to the bacterium's survival and replication within host macrophages, as it is required for optimal replication of bacteria inside macrophages. This Brucella abortus (strain 2308) protein is Blue-light-activated histidine kinase.